The following is a 612-amino-acid chain: Phosphopentomutase (612 aa).

N-acetylalanine is present on Ala2. Residues Arg63 and Ser165 each contribute to the alpha-D-glucose 1,6-bisphosphate site. Ser165 serves as the catalytic Phosphoserine intermediate. Mg(2+) is bound by residues Ser165, Asp322, Asp324, and Asp326. Phosphoserine is present on Ser165. Positions 326, 327, 400, 424, and 438 each coordinate alpha-D-glucose 1,6-bisphosphate.

Belongs to the phosphohexose mutase family. As to quaternary structure, monomer. Mg(2+) is required as a cofactor.

It localises to the cytoplasm. Its subcellular location is the cytosol. The catalysed reaction is alpha-D-ribose 1-phosphate = D-ribose 5-phosphate. The enzyme catalyses 2-deoxy-alpha-D-ribose 1-phosphate = 2-deoxy-D-ribose 5-phosphate. It carries out the reaction alpha-D-glucose 1-phosphate = alpha-D-glucose 6-phosphate. It catalyses the reaction O-phospho-L-seryl-[protein] + alpha-D-glucose 1-phosphate = alpha-D-glucose 1,6-bisphosphate + L-seryl-[protein]. The catalysed reaction is alpha-D-glucose 1,6-bisphosphate + L-seryl-[protein] = O-phospho-L-seryl-[protein] + alpha-D-glucose 6-phosphate. Its activity is regulated as follows. The phosphomutase activity is stimulated by glucose 1,6-bisphosphate. In terms of biological role, catalyzes the conversion of the nucleoside breakdown products ribose-1-phosphate and deoxyribose-1-phosphate to the corresponding 5-phosphopentoses. Catalyzes the reversible isomerization of alpha-D-glucose 1-phosphate to alpha-D-glucose 6-phosphate but with a lower catalytic efficiency. The mechanism proceeds via the intermediate compound alpha-D-glucose 1,6-bisphosphate. In vitro, also has a low glucose 1,6-bisphosphate synthase activity which is most probably not physiologically relevant. This chain is Phosphopentomutase, found in Homo sapiens (Human).